Reading from the N-terminus, the 674-residue chain is Sodium/hydrogen exchanger 1 (674 aa).

The first 24 residues, 1–24 (MKLNKSYILIVVLLLSLFYSSVSS), serve as a signal peptide directing secretion. The segment at 31 to 65 (KSNNHYNSDNSNNDNKNININNNNDGDGDDDDDNN) is disordered. Residues 37–55 (NSDNSNNDNKNININNNND) are compositionally biased toward low complexity. Helical transmembrane passes span 120 to 140 (TIIF…YFII), 144 to 164 (IPFV…GIVF), 175 to 195 (VVSF…IFET), 213 to 233 (MFAV…IYIV), 275 to 297 (LYIL…YSVV), 314 to 334 (VVAI…SLIL), 336 to 356 (WINI…FSYM), 359 to 379 (VLAG…GITL), 401 to 421 (TAAF…LTAH), 432 to 452 (WSIL…CFLL), 460 to 480 (IPWV…FAFS), and 499 to 519 (NTLL…YPLL). The tract at residues 591 to 674 (HELDSNPLRF…NKNNDTLPLI (84 aa)) is disordered. The segment covering 601–618 (DDDEEDDDDEDLDFDSDL) has biased composition (acidic residues). The segment covering 627–657 (DSIHQSDNNNNDNGNNNNNNNNIIINNNSQH) has biased composition (low complexity). The segment covering 662-674 (GSNNKNNDTLPLI) has biased composition (polar residues).

It belongs to the monovalent cation:proton antiporter 1 (CPA1) transporter (TC 2.A.36) family.

The protein resides in the membrane. Its activity is regulated as follows. LY294002, an inhibitor of the catalytic subunit of PI3-kinase, blocks NHE1-dependent (but not NHE1-independent) increase in intracellular pH in response to cAMP. Regulation of intracellular pH homeostasis in response to cAMP, which is essential for chemotaxis. Necessary for F-actin localization and the kinetics of actin polymerization during chemotaxis and cell polarity but not for directional sensing. The polypeptide is Sodium/hydrogen exchanger 1 (nhe1) (Dictyostelium discoideum (Social amoeba)).